A 349-amino-acid polypeptide reads, in one-letter code: Protein-glutamate methylesterase/protein-glutamine glutaminase (349 aa).

In terms of domain architecture, Response regulatory spans 2 to 118 (RVLVVDDSAL…VDLSSVAQEL (117 aa)). At Asp-52 the chain carries 4-aspartylphosphate. The CheB-type methylesterase domain maps to 159 to 345 (VLIGSSTGGP…EEIVRFLEVK (187 aa)). Active-site residues include Ser-164, His-191, and Asp-287.

It belongs to the CheB family. Post-translationally, phosphorylated by CheA. Phosphorylation of the N-terminal regulatory domain activates the methylesterase activity.

The protein resides in the cytoplasm. It carries out the reaction [protein]-L-glutamate 5-O-methyl ester + H2O = L-glutamyl-[protein] + methanol + H(+). It catalyses the reaction L-glutaminyl-[protein] + H2O = L-glutamyl-[protein] + NH4(+). Its function is as follows. Involved in chemotaxis. Part of a chemotaxis signal transduction system that modulates chemotaxis in response to various stimuli. Catalyzes the demethylation of specific methylglutamate residues introduced into the chemoreceptors (methyl-accepting chemotaxis proteins or MCP) by CheR. Also mediates the irreversible deamidation of specific glutamine residues to glutamic acid. The sequence is that of Protein-glutamate methylesterase/protein-glutamine glutaminase from Archaeoglobus fulgidus (strain ATCC 49558 / DSM 4304 / JCM 9628 / NBRC 100126 / VC-16).